Here is a 36-residue protein sequence, read N- to C-terminus: Kappa-theraphotoxin-Aa1a (36 aa).

3 disulfide bridges follow: cysteine 3-cysteine 18, cysteine 10-cysteine 23, and cysteine 17-cysteine 30. Isoleucine amide is present on isoleucine 36.

The protein belongs to the neurotoxin 10 (Hwtx-1) family. As to expression, expressed by the venom gland.

The protein localises to the secreted. Functionally, selective inhibitor of voltage-gated potassium channel Kv10.1/KCNH1/EAG1 (IC(50)=637 nM). It acts by shifting the voltage dependence of channel activation in a depolarising direction. It shows a 100% inhibition at saturating concentrations, shows fast on-rates and is reversible. It also slightly affects channel inactivation, when the membrane is highly depolarised (&gt;+80 mV). This chain is Kappa-theraphotoxin-Aa1a, found in Avicularia aurantiaca (Yellow-banded pinktoe tarantula).